The chain runs to 257 residues: MTLTNPSALVNQLVDFLRQELAQRGFKKVVVGLSGGVDSAVVARLCQEAIGENLHALLMPSSVSSKESVEHALLLCERFNLSHHIQSIAPLELAFRELHPEATPLRIGNACARFRMITLYDFSFKENRLVIGTGNKSEILLGYGTLYGDTACALNPIGDLYKTEIFQLAKFLSIPDEIIQKAPSADLFEGQSDEKELGFSYNDMDQLLFDHIELKLSKEELLAKGHAKELVEMVLKRISTNKFKSEMPPIAQVRGRL.

32–39 (GLSGGVDS) is a binding site for ATP. Aspartate 38 lines the Mg(2+) pocket. Residue arginine 113 participates in deamido-NAD(+) binding. Threonine 133 provides a ligand contact to ATP. Residue glutamate 138 participates in Mg(2+) binding. The ATP site is built by lysine 162 and serine 184.

This sequence belongs to the NAD synthetase family. As to quaternary structure, homodimer.

The catalysed reaction is deamido-NAD(+) + NH4(+) + ATP = AMP + diphosphate + NAD(+) + H(+). The protein operates within cofactor biosynthesis; NAD(+) biosynthesis; NAD(+) from deamido-NAD(+) (ammonia route): step 1/1. Functionally, catalyzes the ATP-dependent amidation of deamido-NAD to form NAD. Uses ammonia as a nitrogen source. The polypeptide is NH(3)-dependent NAD(+) synthetase (Wolinella succinogenes (strain ATCC 29543 / DSM 1740 / CCUG 13145 / JCM 31913 / LMG 7466 / NCTC 11488 / FDC 602W) (Vibrio succinogenes)).